We begin with the raw amino-acid sequence, 771 residues long: Hyperosmolality-gated Ca2+ permeable channel 1.3 (771 aa).

Residues 7–27 (IGVAAAINILTAIIFLLAFAI) form a helical membrane-spanning segment. Phosphoserine is present on S54. 9 helical membrane-spanning segments follow: residues 101–121 (IYLI…SILV), 158–178 (FWTH…VLMK), 375–395 (LIMH…IAFV), 427–447 (FLPG…LMVM), 467–487 (YYIF…SAFE), 512–532 (ATFF…GEIL), 584–604 (PVTP…YLVF), 630–650 (IISA…TKGA), and 651–671 (AQST…HRYC). A disordered region spans residues 744 to 771 (VPTKRQSRINTPAVSHASRGSSRSPPSK). The segment covering 751–771 (RINTPAVSHASRGSSRSPPSK) has biased composition (polar residues).

The protein belongs to the CSC1 (TC 1.A.17) family. In terms of processing, phosphorylated at Ser-54 by BIK1 in response to pathogen-associated molecular pattern (PAMP) perception, promoting its activation. In terms of tissue distribution, preferentially expressed in guard cells.

The protein resides in the cell membrane. The catalysed reaction is Ca(2+)(in) = Ca(2+)(out). Activated following phosphorylation at Ser-54 by BIK1. Calcium-permeable channel that plays a key role in plant stomatal immunity. In response to pathogen-associated molecular pattern (PAMP) perception, phosphorylated and activated by BIK1, triggering rapid influx of calcium ions across the plasma membrane, leading to stomatal closure. This chain is Hyperosmolality-gated Ca2+ permeable channel 1.3, found in Arabidopsis thaliana (Mouse-ear cress).